A 297-amino-acid chain; its full sequence is MSNEIVKFSNQFNNVALKKFDAVHLDVLMAIASRVRERGTATVEFSFEELRGLMRLKQNLTNKQLADKIVQTNARLLALNYMFEDSGKIIQFALFTVFETDPANQTLEVSVNERFAFLLNDLTSQFTRFELAEFADLKSKYAKEFYRRAKQYRSSGIWKVSRDEFCRLLNVSKSTSDSVSNLNRVVLKPIVEECGPLLGLKIERQYAKRRLSGFVFTFARETPPVIDARPVKAKEEQDSGHWTSVAGYGEVFTTTELFDVTAARDHFDGTVDAGECRYCRYDARNRERHARNAGTLF.

It belongs to the initiator RepB protein family.

The sequence is that of Probable replication protein rep (rep) from Bifidobacterium longum (strain NCC 2705).